The primary structure comprises 501 residues: Type II methyltransferase M.BsuBI (501 aa).

It belongs to the N(4)/N(6)-methyltransferase family.

The enzyme catalyses a 2'-deoxyadenosine in DNA + S-adenosyl-L-methionine = an N(6)-methyl-2'-deoxyadenosine in DNA + S-adenosyl-L-homocysteine + H(+). A beta subtype methylase that recognizes the double-stranded sequence 5'-CTGCAG-3', methylates A-5 on both strands, and protects the DNA from cleavage by the BsuBI endonuclease. In Bacillus subtilis, this protein is Type II methyltransferase M.BsuBI (hsdBM).